The chain runs to 85 residues: Large ribosomal subunit protein bL31B (85 aa).

This sequence belongs to the bacterial ribosomal protein bL31 family. Type B subfamily. In terms of assembly, part of the 50S ribosomal subunit.

The polypeptide is Large ribosomal subunit protein bL31B (Staphylococcus haemolyticus (strain JCSC1435)).